A 288-amino-acid chain; its full sequence is MDVTAKYELIGLMAYPIRHSLSPEMQNKALEKAGLPFTYMAFEVDNDSFPGAIEGLKALKMRGTGVSMPNKQLACEYVDELTPAAKLVGAINTIVNDDGYLRGYNTDGTGHIRAIKESGFDIKGKTMVLLGAGGASTAIGAQGAIEGLKEIKLFNRRDKFFDKALAFAQRVNENTDCVVTVTDLADQQAFAEALASADILTNGTKVGMKPLENKSLVNDISLLHPGLLVTECVYNPHMTKLLQQAQQAGCKTIDGYGMLLWQGAEQFTLWTGKDFPLEYVKQVMGFGA.

Residues Lys71 and Asp107 each contribute to the substrate site. NAD(+) contacts are provided by residues 132–135 (AGGA), 155–158 (NRRD), Lys205, 232–235 (CVYN), and Gly255.

Belongs to the shikimate dehydrogenase family. Homodimer.

The catalysed reaction is L-quinate + NAD(+) = 3-dehydroquinate + NADH + H(+). It catalyses the reaction L-quinate + NADP(+) = 3-dehydroquinate + NADPH + H(+). The enzyme catalyses shikimate + NADP(+) = 3-dehydroshikimate + NADPH + H(+). It carries out the reaction shikimate + NAD(+) = 3-dehydroshikimate + NADH + H(+). It functions in the pathway metabolic intermediate biosynthesis; chorismate biosynthesis; chorismate from D-erythrose 4-phosphate and phosphoenolpyruvate: step 4/7. Its function is as follows. The actual biological function of YdiB remains unclear, nor is it known whether 3-dehydroshikimate or quinate represents the natural substrate. Catalyzes the reversible NAD-dependent reduction of both 3-dehydroshikimate (DHSA) and 3-dehydroquinate to yield shikimate (SA) and quinate, respectively. It can use both NAD or NADP for catalysis, however it has higher catalytic efficiency with NAD. This is Quinate/shikimate dehydrogenase from Escherichia coli O157:H7.